Consider the following 470-residue polypeptide: Calcium-binding and coiled-coil domain-containing protein 2 (470 aa).

A CLIR motif is present at residues 131 to 134; it reads ILLV. Residues 132-368 are a coiled coil; sequence LLVTTEEEAQ…QMEDLSYTLE (237 aa). The short motif at 201-204 is the LIR-like element; the sequence is QQNQ. The UBZ1-type zinc-finger motif lies at 441–464; sequence QMQCPECGSEFENFQVFQDHIFCH. Zn(2+) contacts are provided by Cys-444, Cys-447, His-460, and His-464.

This sequence belongs to the CALCOCO family.

The protein resides in the cytoplasm. It localises to the perinuclear region. It is found in the cytoskeleton. The protein localises to the cytoplasmic vesicle. Its subcellular location is the autophagosome membrane. Its function is as follows. Xenophagy-specific receptor required for autophagy-mediated intracellular bacteria degradation. Acts as an effector protein of galectin-sensed membrane damage that restricts the proliferation of infecting pathogens upon entry into the cytosol by targeting galectin-associated bacteria for autophagy. Initially orchestrates bacteria targeting to autophagosomes and subsequently ensures pathogen degradation by regulating pathogen-containing autophagosome maturation. May play a role in ruffle formation and actin cytoskeleton organization and seems to negatively regulate constitutive secretion. The protein is Calcium-binding and coiled-coil domain-containing protein 2 of Xenopus tropicalis (Western clawed frog).